The following is a 435-amino-acid chain: MQNHHHQQSSYGGGYPGQAYREQHPPPNPYGYGQPSPQPGYGAPPPHNGYATAVGIRPAAATYWKRGVQWKTAWYVIAFGAGRNASALESVKYAAADTCNTGMNQYQNPYSHGHQGGPPPPPTDPVAFGHGAPQGYSFQYSRCTGKRKALLIGINYFGQKGQLRGCINDVKNMSTYLNQNFGYAREDMVLLTDDQQNPMSQPTKANILRAMHWLVKDAQPNDSLFFHYSGHGGQTPDLDGDEEDGYDEVIYPVDFRQAGHIVDDEMHRIMVRPLRPGVRLTAIFDSCHSGSALDLPYIYSTQGILKEPNLAKEAGQGLLGVVSAYARGDMGGMVSTAVGFLKRATKGDEAYTRSKQTKTSPADVIMWSGSKDSQTSQDAQIAGQATGAMSWAFITALRKNPQQSYVQLLNSIRDELATKYSQKPQLSCSHPLGKH.

2 disordered regions span residues 1 to 46 (MQNH…APPP) and 106 to 129 (YQNP…VAFG). Residues 36 to 46 (SPQPGYGAPPP) show a composition bias toward pro residues. Active-site residues include His231 and Cys287.

It belongs to the peptidase C14B family.

Its function is as follows. Involved in cell death (apoptosis). The protein is Metacaspase-1A (casA) of Neosartorya fischeri (strain ATCC 1020 / DSM 3700 / CBS 544.65 / FGSC A1164 / JCM 1740 / NRRL 181 / WB 181) (Aspergillus fischerianus).